We begin with the raw amino-acid sequence, 516 residues long: MEEFQGYLEKYRSRRQYFLYPLLFQEYIYTIAHGHGLNGSSKIEPVEFFGYDNKSSLVLVKRLITRMYQQNCLVYSINDSNQNRFIGRDLFFYSPLFFQMVSEGFAAIVEIPFSLQLGFSFKEKEIQKYHNLRSIHSIFPFLEDKFSHLNYVSEILIPHPIHTETLVQILQCWVQDVPSLHFLRFFLHKYDNWNSFIIPNKSSYAFSKENKKLFWFFYNSYVFEFEFLVVXLRKQSYYLQSTSFGXFLXRRNFYGKMEHLINVCRNYSQKTLRFFKDPFMHYIRYQGKAILASRDTHILMKKWKCYLVNFWQYYFHFWSYSYRIHINQLKNHSFLLGGYFSSVLINPLAVKNKMLDHSFLIDTVTKKFDTTIPVIPLIGSLSKAKFCTVLGHPNSKTIWADLSDSDIVGRFGRICRNLSHYYSGSSKKQSLYRIKYXXRLSCARTLARKHKRTIRALLQRLGTGFLEEFFTEEEQVLSLIFPKTTIPFPLYGLHRERIWNLDIIRIDDLVNHLDWP.

It belongs to the intron maturase 2 family. MatK subfamily.

It localises to the plastid. The protein localises to the chloroplast. Functionally, usually encoded in the trnK tRNA gene intron. Probably assists in splicing its own and other chloroplast group II introns. In Colchicum speciosum (Giant meadow saffron), this protein is Maturase K.